The primary structure comprises 227 residues: PKHD-type hydroxylase Bxeno_B2194 (227 aa).

The region spanning 78 to 178 (KVFPPLFNRY…RVASFFWIQS (101 aa)) is the Fe2OG dioxygenase domain. Positions 96, 98, and 159 each coordinate Fe cation. Arginine 169 serves as a coordination point for 2-oxoglutarate.

Fe(2+) is required as a cofactor. Requires L-ascorbate as cofactor.

This chain is PKHD-type hydroxylase Bxeno_B2194, found in Paraburkholderia xenovorans (strain LB400).